We begin with the raw amino-acid sequence, 211 residues long: Urease accessory protein UreG (211 aa).

13 to 20 contacts GTP; it reads GPVGSGKT.

This sequence belongs to the SIMIBI class G3E GTPase family. UreG subfamily. In terms of assembly, homodimer. UreD, UreF and UreG form a complex that acts as a GTP-hydrolysis-dependent molecular chaperone, activating the urease apoprotein by helping to assemble the nickel containing metallocenter of UreC. The UreE protein probably delivers the nickel.

Its subcellular location is the cytoplasm. Functionally, facilitates the functional incorporation of the urease nickel metallocenter. This process requires GTP hydrolysis, probably effectuated by UreG. The chain is Urease accessory protein UreG from Alkalilimnicola ehrlichii (strain ATCC BAA-1101 / DSM 17681 / MLHE-1).